The sequence spans 146 residues: Hemoglobin subunit beta-1 (146 aa).

A Globin domain is found at 2–146 (KWSDKERAVI…VVSALGKQYC (145 aa)). Heme b-binding residues include His-63 and His-92.

This sequence belongs to the globin family. Hb1 is a heterotetramer of two alpha-1 chains and two beta-1 chains; Hb2 is a heterotetramer of two alpha-2 chains and two beta-1 chains. As to expression, red blood cells.

In terms of biological role, involved in oxygen transport from gills to the various peripheral tissues. This Anarhichas minor (Arctic spotted wolffish) protein is Hemoglobin subunit beta-1 (hbb1).